The primary structure comprises 152 residues: Complexin (152 aa).

Positions Met1–Lys119 are disordered. Acidic residues predominate over residues Asp23–Ala39. 2 stretches are compositionally biased toward basic and acidic residues: residues Glu41–Glu82 and Asp90–Leu104. Residues Glu59 to Leu75 are interaction with the SNARE complex. Cys149 is subject to Cysteine methyl ester. Cys149 carries the S-farnesyl cysteine lipid modification. A propeptide spans Ser150 to Gln152 (removed in mature form).

This sequence belongs to the complexin/synaphin family. In terms of assembly, binds to the SNARE core complex containing SNAP25, synaptobrevin and syntaxin-1.

It localises to the membrane. Its subcellular location is the cytoplasm. The protein resides in the cytosol. In terms of biological role, positively regulates a late step in synaptic vesicle exocytosis. The polypeptide is Complexin (cpx) (Doryteuthis pealeii (Longfin inshore squid)).